The primary structure comprises 193 residues: Thymidine kinase (193 aa).

ATP contacts are provided by residues 9-16 (STMNAGKS) and 87-90 (DEAN). Glu88 acts as the Proton acceptor in catalysis. Positions 145, 147, 182, and 185 each coordinate Zn(2+).

It belongs to the thymidine kinase family. As to quaternary structure, homotetramer.

The protein localises to the cytoplasm. The enzyme catalyses thymidine + ATP = dTMP + ADP + H(+). The protein is Thymidine kinase of Agrobacterium fabrum (strain C58 / ATCC 33970) (Agrobacterium tumefaciens (strain C58)).